The primary structure comprises 63 residues: Sperm protamine P1 (63 aa).

The tract at residues 1-47 is disordered; it reads MARCRRHIRSRSRSRNQCQRRRRRSHYNRRRTYRRSRRHSRRRRVRR.

The protein belongs to the protamine P1 family. As to expression, testis.

The protein resides in the nucleus. The protein localises to the chromosome. Protamines substitute for histones in the chromatin of sperm during the haploid phase of spermatogenesis. They compact sperm DNA into a highly condensed, stable and inactive complex. This is Sperm protamine P1 (PRM1) from Planigale tenuirostris (Narrow-nosed planigale).